Reading from the N-terminus, the 282-residue chain is Bicarbonate transport ATP-binding protein CmpD (282 aa).

One can recognise an ABC transporter domain in the interval 24–257 (LTIENVSKVY…RPRDRDRIME (234 aa)). 60-67 (GHSGCGKS) is an ATP binding site.

The protein belongs to the ABC transporter superfamily. Nitrate/nitrite/cyanate uptake transporter (NitT) (TC 3.A.1.16) family. As to quaternary structure, the complex is composed of two ATP-binding proteins (CmpC and CmpD), a transmembrane protein (CmpB) and a solute-binding protein (CmpA).

It localises to the cell inner membrane. Its function is as follows. Part of the ABC transporter complex CmpABCD involved in bicarbonate transport. Responsible for energy coupling to the transport system. This is Bicarbonate transport ATP-binding protein CmpD (cmpD) from Synechocystis sp. (strain ATCC 27184 / PCC 6803 / Kazusa).